Consider the following 63-residue polypeptide: Large ribosomal subunit protein bL28 (63 aa).

It belongs to the bacterial ribosomal protein bL28 family.

This Desulfatibacillum aliphaticivorans protein is Large ribosomal subunit protein bL28.